We begin with the raw amino-acid sequence, 98 residues long: NADH-ubiquinone oxidoreductase chain 4L (98 aa).

Transmembrane regions (helical) follow at residues 1-21 (MPVV…GLLI), 29-49 (SLLC…VTVL), and 61-81 (IILL…LVMV).

Belongs to the complex I subunit 4L family. As to quaternary structure, core subunit of respiratory chain NADH dehydrogenase (Complex I) which is composed of 45 different subunits.

The protein resides in the mitochondrion inner membrane. It catalyses the reaction a ubiquinone + NADH + 5 H(+)(in) = a ubiquinol + NAD(+) + 4 H(+)(out). Its function is as follows. Core subunit of the mitochondrial membrane respiratory chain NADH dehydrogenase (Complex I) which catalyzes electron transfer from NADH through the respiratory chain, using ubiquinone as an electron acceptor. Part of the enzyme membrane arm which is embedded in the lipid bilayer and involved in proton translocation. In Helarctos malayanus (Malayan sun bear), this protein is NADH-ubiquinone oxidoreductase chain 4L (MT-ND4L).